Reading from the N-terminus, the 45-residue chain is Protamine Z2 (45 aa).

Positions 1–23 are enriched in basic residues; that stretch reads MKCGRKRRRRRRHACKRKKRACK. The interval 1–26 is disordered; it reads MKCGRKRRRRRRHACKRKKRACKQRS.

In terms of tissue distribution, testis.

The protein localises to the nucleus. The protein resides in the chromosome. Its function is as follows. Protamines substitute for histones in the chromatin of sperm during the haploid phase of spermatogenesis. They compact sperm DNA into a highly condensed, stable and inactive complex. The polypeptide is Protamine Z2 (Scyliorhinus canicula (Small-spotted catshark)).